A 124-amino-acid polypeptide reads, in one-letter code: Large ribosomal subunit protein uL29 (124 aa).

It belongs to the universal ribosomal protein uL29 family.

This chain is Large ribosomal subunit protein uL29 (RPL35), found in Tetrahymena thermophila (strain SB210).